The sequence spans 662 residues: UvrABC system protein B (662 aa).

Residues 31–188 form the Helicase ATP-binding domain; that stretch reads DNIEGGEKAQ…NDLVDIQFER (158 aa). 44-51 lines the ATP pocket; the sequence is GATGTGKT. Residues 97 to 120 carry the Beta-hairpin motif; that stretch reads YYDYYQPEAYVPSSDTYIEKDSSV. One can recognise a Helicase C-terminal domain in the interval 435-601; that stretch reads QIDDLLGEIN…TIKKEIRDLI (167 aa). Residues 626 to 661 form the UVR domain; that stretch reads KELVKKLEKQMQEAVEVLDFELAAQIRDMMLEVKAL.

The protein belongs to the UvrB family. Forms a heterotetramer with UvrA during the search for lesions. Interacts with UvrC in an incision complex.

The protein resides in the cytoplasm. The UvrABC repair system catalyzes the recognition and processing of DNA lesions. A damage recognition complex composed of 2 UvrA and 2 UvrB subunits scans DNA for abnormalities. Upon binding of the UvrA(2)B(2) complex to a putative damaged site, the DNA wraps around one UvrB monomer. DNA wrap is dependent on ATP binding by UvrB and probably causes local melting of the DNA helix, facilitating insertion of UvrB beta-hairpin between the DNA strands. Then UvrB probes one DNA strand for the presence of a lesion. If a lesion is found the UvrA subunits dissociate and the UvrB-DNA preincision complex is formed. This complex is subsequently bound by UvrC and the second UvrB is released. If no lesion is found, the DNA wraps around the other UvrB subunit that will check the other stand for damage. The protein is UvrABC system protein B of Streptococcus pneumoniae (strain ATCC 700669 / Spain 23F-1).